We begin with the raw amino-acid sequence, 415 residues long: L-cysteine:1D-myo-inositol 2-amino-2-deoxy-alpha-D-glucopyranoside ligase (415 aa).

Cysteine 43 contributes to the Zn(2+) binding site. L-cysteinyl-5'-AMP contacts are provided by residues 43 to 46, threonine 58, and 81 to 83; these read CGIT and NIT. Positions 45 to 55 match the 'HIGH' region motif; that stretch reads ITPYDATHLGH. The 'ERGGDP' region motif lies at 187 to 192; that stretch reads ERGGDP. Tryptophan 227 contributes to the L-cysteinyl-5'-AMP binding site. Cysteine 231 is a binding site for Zn(2+). Residue 249-251 coordinates L-cysteinyl-5'-AMP; the sequence is GSD. Residue histidine 256 participates in Zn(2+) binding. Residue isoleucine 283 coordinates L-cysteinyl-5'-AMP. The short motif at 289 to 293 is the 'KMSKS' region element; that stretch reads KMSKS.

Belongs to the class-I aminoacyl-tRNA synthetase family. MshC subfamily. As to quaternary structure, monomer. It depends on Zn(2+) as a cofactor.

It catalyses the reaction 1D-myo-inositol 2-amino-2-deoxy-alpha-D-glucopyranoside + L-cysteine + ATP = 1D-myo-inositol 2-(L-cysteinylamino)-2-deoxy-alpha-D-glucopyranoside + AMP + diphosphate + H(+). Functionally, catalyzes the ATP-dependent condensation of GlcN-Ins and L-cysteine to form L-Cys-GlcN-Ins. The polypeptide is L-cysteine:1D-myo-inositol 2-amino-2-deoxy-alpha-D-glucopyranoside ligase (Mycobacterium sp. (strain JLS)).